Reading from the N-terminus, the 112-residue chain is UPF0342 protein STER_0693 (112 aa).

This sequence belongs to the UPF0342 family.

This is UPF0342 protein STER_0693 from Streptococcus thermophilus (strain ATCC BAA-491 / LMD-9).